Reading from the N-terminus, the 309-residue chain is Probable 2,4-dienoyl-CoA reductase 3 [(3E)-enoyl-CoA-producing] (309 aa).

Residues 32–37 (GGGTGI), arginine 57, and aspartate 83 contribute to the NADP(+) site. Arginine 57 lines the substrate pocket. Substrate is bound by residues phenylalanine 116 and serine 124. Tyrosine 166 functions as the Proton acceptor in the catalytic mechanism. NADP(+)-binding positions include lysine 181 and 207–210 (PGPI). Residue arginine 218 coordinates substrate.

The protein belongs to the short-chain dehydrogenases/reductases (SDR) family. 2,4-dienoyl-CoA reductase subfamily.

It catalyses the reaction a (2E,4E)-dienoyl-CoA + NADPH + H(+) = a 4,5-saturated-(3E)-enoyl-CoA + NADP(+). It carries out the reaction a (2E,4Z)-dienoyl-CoA + NADPH + H(+) = a 4,5-saturated-(3E)-enoyl-CoA + NADP(+). Functionally, auxiliary enzyme of beta-oxidation. It participates in the metabolism of unsaturated fatty enoyl-CoA esters having double bonds in both even- and odd-numbered positions. Catalyzes the NADP-dependent reduction of 2,4-dienoyl-CoA to yield trans-3-enoyl-CoA. This Caenorhabditis elegans protein is Probable 2,4-dienoyl-CoA reductase 3 [(3E)-enoyl-CoA-producing].